The following is a 185-amino-acid chain: Cbp/p300-interacting transactivator 4 (185 aa).

Disordered stretches follow at residues 15 to 64 and 95 to 130; these read PRPP…VAYG and YPGR…AHAL. Residues 103–125 are compositionally biased toward pro residues; it reads PGAPGGPSGPQPAPGAPAPPLQP.

This sequence belongs to the CITED family. In terms of assembly, interacts via its C-terminal region with the CH1 domain of CREBBP and EP300. Interacts with all TFAP2/AP-2 isoforms.

The protein resides in the nucleus. The protein localises to the cytoplasm. Its function is as follows. Acts as a transcriptional coactivator for TFAP2/AP-2. Enhances estrogen-dependent transactivation mediated by estrogen receptors. May function as an inhibitor of transactivation by HIF1A by disrupting HIF1A interaction with CREBBP. May be involved in regulation of gene expression during development and differentiation of blood cells, endothelial cells and mammary epithelial cells. In Bos taurus (Bovine), this protein is Cbp/p300-interacting transactivator 4 (CITED4).